The chain runs to 342 residues: C-X-C chemokine receptor type 6 (342 aa).

Over 1-32 (MAEHDYHEDYGFSSFNDSSQEEHQDFLQFSKV) the chain is Extracellular. Asn16 is a glycosylation site (N-linked (GlcNAc...) asparagine). Residues 33–59 (FLPCMYLVVFVCGLVGNSLVLVISIFY) form a helical membrane-spanning segment. Over 60-68 (HKLQSLTDV) the chain is Cytoplasmic. The chain crosses the membrane as a helical span at residues 69 to 89 (FLVNLPLADLVFVCTLPFWAY). Residues 90 to 103 (AGIHEWVFGQVMCK) lie on the Extracellular side of the membrane. A disulfide bridge links Cys102 with Cys180. The helical transmembrane segment at 104 to 125 (SLLGIYTINFYTSMLILTCITV) threads the bilayer. Residues 126–143 (DRFIVVVKATKAYNQQAK) are Cytoplasmic-facing. The helical transmembrane segment at 144 to 164 (RMTWGKVTSLLIWVISLLVSL) threads the bilayer. Residues 165-187 (PQIIYGNVFNLDKLICGYHDEAI) lie on the Extracellular side of the membrane. The chain crosses the membrane as a helical span at residues 188–215 (STVVLATQMTLGFFLPLLTMIVCYSVII). At 216-231 (KTLLHAGGFQKHRSLK) the chain is on the cytoplasmic side. The chain crosses the membrane as a helical span at residues 232–259 (IIFLVMAVFLLTQMPFNLMKFIRSTHWE). Topologically, residues 260 to 275 (YYAMTSFHYTIMVTEA) are extracellular. Residues 276–293 (IAYLRACLNPVLYAFVSL) form a helical membrane-spanning segment. At 294–342 (KFRKNFWKLVKDIGCLPYLGVSHQWKSSEDNSKTFSASHNVEATSMFQL) the chain is on the cytoplasmic side.

It belongs to the G-protein coupled receptor 1 family. Expressed in lymphoid tissues and activated T cells.

Its subcellular location is the cell membrane. Functionally, receptor for the C-X-C chemokine CXCL16. Used as a coreceptor by SIVs and by strains of HIV-2 and m-tropic HIV-1. The protein is C-X-C chemokine receptor type 6 (CXCR6) of Homo sapiens (Human).